The primary structure comprises 404 residues: Major outer membrane porin (404 aa).

An N-terminal signal peptide occupies residues Met1–Ala22. The interval Gly85–Tyr110 is disordered. Over residues Thr89–Thr103 the composition is skewed to low complexity.

The protein belongs to the chlamydial porin (CP) (TC 1.B.2) family. As to quaternary structure, part of a disulfide cross-linked outer membrane complex (COMC) composed of the major outer membrane porin (MOMP), the small cysteine-rich protein (OmcA) and the large cysteine-rich periplasmic protein (OmcB).

It localises to the cell outer membrane. In elementary bodies (EBs, the infectious stage, which is able to survive outside the host cell) provides the structural integrity of the outer envelope through disulfide cross-links with the small cysteine-rich protein and the large cysteine-rich periplasmic protein. It has been described in publications as the Sarkosyl-insoluble COMC (Chlamydia outer membrane complex), and serves as the functional equivalent of peptidoglycan. Functionally, permits diffusion of specific solutes through the outer membrane. This Chlamydia muridarum protein is Major outer membrane porin (ompA).